The primary structure comprises 1352 residues: Inhibitor of Bruton tyrosine kinase (1352 aa).

ANK repeat units follow at residues 51-80 (FGRN…DLLV) and 85-114 (SGWT…SLYM). 3 RCC1 repeats span residues 141–194 (PTEV…FLSQ), 195–246 (KGQV…VLTD), and 248–301 (GCVY…LWTR). In terms of domain architecture, BTB 1 spans 565–645 (HDVTFQVGNR…MYTDTCDLLT (81 aa)). The tract at residues 692-716 (AHTLSERQKSKPKSSKKGKGVGDDD) is disordered. Positions 701–710 (SKPKSSKKGK) are enriched in basic residues. The 69-residue stretch at 769 to 837 (YDVTMKSVDG…LYTDEAVVIK (69 aa)) folds into the BTB 2 domain. Positions 976-1002 (FKKAKTRAKKKPRKRSDSSGGYTLSDV) are disordered. Over residues 977–989 (KKAKTRAKKKPRK) the composition is skewed to basic residues. At S991 the chain carries Phosphoserine. A compositionally biased stretch (polar residues) spans 993–1002 (SSGGYTLSDV). S1005, S1031, S1034, S1040, S1046, S1055, S1084, S1111, S1113, and S1116 each carry phosphoserine. The interval 1032 to 1094 (EGSYAGVASP…PTTKSAPQFI (63 aa)) is disordered. The segment covering 1084-1094 (SPTTKSAPQFI) has biased composition (polar residues).

Interacts with the PH domain of BTK.

The protein localises to the cytoplasm. The protein resides in the membrane. Acts as an inhibitor of BTK tyrosine kinase activity, thereby playing a role in B-cell development. Down-regulates BTK kinase activity, leading to interference with BTK-mediated calcium mobilization and NF-kappa-B-driven transcription. In Mus musculus (Mouse), this protein is Inhibitor of Bruton tyrosine kinase (Ibtk).